A 134-amino-acid polypeptide reads, in one-letter code: ATP synthase epsilon chain (134 aa).

This sequence belongs to the ATPase epsilon chain family. In terms of assembly, F-type ATPases have 2 components, CF(1) - the catalytic core - and CF(0) - the membrane proton channel. CF(1) has five subunits: alpha(3), beta(3), gamma(1), delta(1), epsilon(1). CF(0) has three main subunits: a, b and c.

Its subcellular location is the cell membrane. Produces ATP from ADP in the presence of a proton gradient across the membrane. The chain is ATP synthase epsilon chain from Staphylococcus aureus (strain USA300).